Consider the following 4042-residue polypeptide: MATTTAPTTQGHNQPSREPIAIVGSACRFPGGASSPSKLWKLLEHPRDVLKEIPPDRFSVDGFYHPDNMHHGTSNVRHSYILDDDIRVFDAQFFGIKPVEANSIDPQQRLLMETVYEGIESAGLQLNKMKGSQTGVYVGLMSNDYADMLGNDQESFPTYFATGTARSIVSNRVSYFFDWHGPSMTIDTACSSSLVAMHQAVQYLRSGDGSDVAIAAGTNILLNPDQYIAESKLKMLSPDGRSQMWDEKANGYARGDGIAVVVLKTLSQALRDGDHIECIVRETHINQDGKTKGITMPSATAQTALIRSTYKNAGLDITKPSDRPQFFEAHGTGTPAGDPIEAEAIHTAFFGYKGLSKEIEPLSVGSIKTIIGHTEGTAGLAAVLKASLALQAGVIPPNLLFDKVNPKVKPFYGNLQIQTQAKSWPSLAPGAVRRASVNSFGFGGANAHAILEAYEPSSTPTVGTPANVFTALNVSAMSETALRGTLKKYVEYLKEEPSVDLRSLALTVNTRRSTFPVRTSVFGTSVEELSQRLSERSEAEGKTLTPVAPTSLSSSPKILGVFTGQGAQWKQMGAVLLATSPRVVAILDQLEKSLAELPDGPSWSIKGEILADEDSRVNEAVISQPLCTAVQIVLVDLLQSAGVQFHTVVGHSSGEIGAAYAAGYLSASDAIRIAYYRGLHLYLAQGPNGQQGAMMAVGTSFEDAQELCDLPAFRGRISIAASNSSASVTLSGDLNAIEWAKDVFDDEKKFARLLKVDKAYHSHHMLACSDAYRKSMTDCGITVLQPARNGTTWISSVYGEDALDYRHEMNAEYWISNMVSPVLFSQAIEFAMADQGPFDIGIECGPHPALKGPALQVIQEMLGSSIPYTGLLSRGRPDTQALAEGISYLWQALGADVVNYTSFDRFIAGPDASEPQVLANLPSYAWDHDRAFWHESRQYWANRTKEDPPHEILGTKCPDGTDQQHRWRNMLRPREIPWIAGHQIQEQMVFPAAGYVSAAIEAVQMVTRGQSLGAIEIEDFVIGQAIAFNDEYASVETQFTLTDISVEKDIWSASFFFYSASPKSSRSLDLNASGKLKVTLGEPKDDFLPPHLSPEFNMIDVDSERFYDALKKLGFGYTGPFKALGSLKRRMGVATGTITNPTSTDPAHDLLLHPATFDNAIQSIILAYCYPNDGRLWSVQLPTGIKKIKINPVLCNRYAGKKALLCFKASTSDDRSAEIGGDVDIYDEQGNNALMQLEGLQTKPLANATAANDSPLFLETIWDIESPSREAAVADRPDMQPKTELSFDVERVAFFYLRHLDSVATREEREKAESHHKIFFEYIDHTVANVKSGTAQFAKREWMYDTHDEILDIISKYPDSLDMKLMHAVGEHLLPVIRGETTMLEYMREDNLLNDFYVHAIGFDEYTENLAQQVSQFSHRYPHMNILEIGAGTGGATKRIFSKLGKRFGSYTYTDISAGFFEKTRETFREYEHMMTFKALNIEKDPVEQGFTEQSYDLVVASLVLHATHEMETTMRNVRRLLKPGGYLIMLELGDYIEMRTGLIFGSLPGWWMGYDDGRKLSPCMSEEDWSVCMQKTGFSGVDAIVPRQSELPISLAVLTGQAVDDHVNFLRDPLTPGSIDFVESNLTIIGGTTSKVSAMVEEAAKSLGRFYEKIVTATSLAELDTTEVPFMGSVLFLTDLDEPIFENVTEDALTALKQLFKQSRTCLWVTQGARDDNPFQNMSVGLGRVVKLEMTHLRLQSLDFDVETEPSAPTIMQRLLQFEAMAQWEQSGESKDLLWSVEPEIGYDHGKAIIPRLMPNPVRNARYNSSRRLITKYMEPTSANLSLRWSGKSYDIHEGEPSGATSLVMDGRVQLEVSHSTLDAIGVTATDYAYLVLGKNVKSQQQVIALTPKSDSIVRVFDSWTVPYSMAEDDALRLLPVVYTNLMALSVISRLSSGETLVLVEPEEAFAQTLSRLATERAISVVTLTSRMDVKNSDWIYLHVNSPKRLVRSTVPRNASWVIADRDQGGLAANVLQCLPANCKILATESLTSKQPKLDTFSSMAFIPSILRTAFVRAHDIKATLELPSVVAAADISSDNQPSTEATFFSWTASPSVPVQVTPVDHGTLFSSEKTYWLVGLSGGLGLSLCDWMVKHGAKYIVITSRNPQVDARWEQHMKAQGAVVRVYANDITDRESVSSVCKKIRDELPPVGGIAQGAMVLADTMFVDMDLPRVQKVVGPKVNGSIHLHEMFVEVDLEFFVFFSSMAYVTGNQGQSIYAAANAYMTALAAQRRKRGLAGSAINIGTIIGNGYVTRQLTIAQQEYLTHMGNVFMSEQDFHQIFAEAVVAGRPTSKDIPEIMTGLRLAHLDDSDKVTWFHNPKFSHCVLWPEEQGGKAVMSKQNVTVRAQLLLATTADEAREIIEESLAAKLRSSLQIDATVSVINMNADQLGLDSLVAVDIRSWFIKELNVEMPVLKILGGYTVAEMVAAAQEKLSPSLIPNLGKEVDPSLKAVVKAQVEKPVAAAEEKPIVTEKAEYADFDDENEEEGIPTEDSLPEITVSDESSELSDREPAKFNFNGPGFKKVGFSPGPQTPLSEDDRSKWSSYGSPFDSDSDNASIRKSRTSAATSVTALDEYFSKPDHTIFERTLPMSFGQTRFWFLKFYMEDQTTFNITTSISLAGKLDVGRFSRAVHHLGRRHEALRTAFFTDSNNQPMQAVLKEPVLRLEHARGEANVASEYRRIKNHQYDIGRGETMKITLLSLSEKLHQLIIGYHHINMDGISLEVIIRDLQQLYDGKSLAPVSIQYPDFSIMQYKEHSSGQWDDELTFWKSEFADIPEPLPILPPSTKAVRTPLSIYSSNTVKFEVGAELSSQIENACKRTKTSPFNFYLATFKVLLYRLAEGKATDICIGMADGGRNNDLVSQSVGFFLNLLPLRFKQQSSQMFSDALKEARSKVITALANSKVPFDVLLNEVNAPRTATLSPLFQAFINYRQGVQEKRQFCGCESEATKFDGSQTAYDLSLDILGNPGSGIVYLAGQSSLYSQSDVETIAQSYYALLKAFAKNPALRISRPSLYDPQAVDHALAKGKGPTNVGTWPETLVHRVDEIVKAHGSKVALKSATAKLTYTQMAERVNAIASTLQSNGINKCSRVGVFQDPSTDFFCTILAVLRIGAVFVPLEPRLTAPRLATMVQDSDLNAIVYDKANQKTLAELGSNSKKINVSLVLAKSSAVVSNQATPGATAIILYTSGSTGKPKGILLSHSAWRNQIESSSRAWEVPTGTGVHLQQSSWSFDISISQTFVALANGASLIITPKTMRGDSSAITKTIVSDQVTHVQATPSELSSWLRFGDLAALRASKWQFAMTGGERMTPALIDGFRKLAKNDLKLFNAYGPAETTLAVGSSEVDYMTSDDLDTPFTLFPNYSVYILDGQKQPVPAGIPGEVYIGGAGVAQGYLNQDSLTAKRFLPDTFGTTEYTHFGWTKMHRSGDRGHLSEDGHLVLEGRIDGDTQVKLRGIRIDLQDIESAMVQQANGALTEAVVSVCKLQETEYLVAHVVISPTFTGNTESFLDQLRASLPVPQYMQPAIAVTLDALPVNHSGKVDRKAIAALPILPKATQPGATSQPRDSTEKLKDIWTQVLGQGMTSLHHIDAQSDFFHVGGSSLALVEVQAKIKTIFQVEVSLVQLFENPTLGAMARMVDPTAFSAPVNANLTIPAEVATAISAPTTSINTAPKEIDWEEETALTDDFYDIEIDPTPKDQGLPYKTVVITGATGFLGKALLRRMLDDNHIDKIHAITLRRSRSDLPGIFSDPKVHLHRGDLNAPRLGLSETAAAEIFAETDAVIHNGADVSFMKTYRTLSKTNVGSTRELVKLCLPHRIPIHYISSASVVHLSGLESYGEASVSSFEPPQDGTDGYTASKWASERFLERVSEKFSVPIWIHRPSSITGEDAPTLDLMTNMLSFSKKLRKAPTSPAWQGTLDFVDVEKVATEIVEEVKNDSAHPGGLVKYMYESGDLEIAVDDMKGSLERETGQAFQTLSLEEWTKAAAEEVTNELGICCSK.

The Ketosynthase family 3 (KS3) domain maps to 17–453; sequence REPIAIVGSA…GANAHAILEA (437 aa). Residues cysteine 190, histidine 330, and histidine 373 each act as for beta-ketoacyl synthase activity in the active site. Residues 561 to 878 form a malonyl-CoA:ACP transacylase (MAT) domain region; it reads VFTGQGAQWK…TGLLSRGRPD (318 aa). An N-terminal hotdog fold region spans residues 950-1083; sequence HEILGTKCPD…GKLKVTLGEP (134 aa). The dehydratase (DH) domain stretch occupies residues 950-1249; it reads HEILGTKCPD…LQTKPLANAT (300 aa). The PKS/mFAS DH domain occupies 950–1251; that stretch reads HEILGTKCPD…TKPLANATAA (302 aa). Histidine 982 acts as the Proton acceptor; for dehydratase activity in catalysis. Residues 1098–1251 form a C-terminal hotdog fold region; that stretch reads MIDVDSERFY…TKPLANATAA (154 aa). Aspartate 1158 acts as the Proton donor; for dehydratase activity in catalysis. A methyltransferase (MT) domain region spans residues 1390 to 1613; it reads DNLLNDFYVH…VDDHVNFLRD (224 aa). The interval 2116–2289 is ketoreductase (KR)domain; the sequence is TYWLVGLSGG…AGSAINIGTI (174 aa). Residues 2399 to 2476 enclose the Carrier 1 domain; sequence EAREIIEESL…EMVAAAQEKL (78 aa). An O-(pantetheine 4'-phosphoryl)serine modification is found at serine 2436. Residues 2515-2601 are disordered; that stretch reads EKAEYADFDD…FDSDSDNASI (87 aa). A compositionally biased stretch (acidic residues) spans 2520–2532; that stretch reads ADFDDENEEEGIP. The interval 2629 to 3061 is condensation; sequence RTLPMSFGQT…ISRPSLYDPQ (433 aa). The tract at residues 3089–3486 is adenylation; the sequence is EIVKAHGSKV…EDGHLVLEGR (398 aa). One can recognise a Carrier 2 domain in the interval 3607 to 3684; it reads RDSTEKLKDI…AMARMVDPTA (78 aa). Serine 3644 bears the O-(pantetheine 4'-phosphoryl)serine mark. The tract at residues 3750–3971 is reductase-like domain; the sequence is ITGATGFLGK…DFVDVEKVAT (222 aa).

In the C-terminal section; belongs to the NRP synthetase family.

The protein operates within mycotoxin biosynthesis. In terms of biological role, hybrid PKS-NRPS synthetase; part of the gene cluster that mediates the biosynthesis of the cytotoxic leucine-containing cytochalasans, including aspochalasin C, aspochalasin E, TMC-169, flavichalasine F, aspergillin PZ, aspochalasin M and flavichalasine G. The first step in the pathway is catalyzed by the hybrid PKS-NRPS ffsA that utilizes 8 units of malonyl-CoA to iteratively assemble the octaketide chain before addition of L-leucine by the C-terminal NRPS modules. Because ffsA lacks a designated enoylreductase (ER) domain, the required activity is provided the enoyl reductase fssC. The methyltransferase (MT) domain of ffsA catalyzes the alpha-methylation at C10 and C14 using S-adenosyl-L-methionine as the methyl-donating cosubstrate. Reduction by the hydrolyase ffsE, followed by dehydration and intra-molecular Diels-Alder cyclization by the Diels-Alderase ffsF then yield the required isoindolone-fused macrocycle. A number of oxidative steps catalyzed by the tailoring cytochrome P450 monooxygenase ffsD, the FAD-linked oxidoreductase ffsJ and the short-chain dehydrogenase/reductase ffsI, are further required to afford the final products. In Aspergillus flavipes, this protein is Polyketide synthase-nonribosomal peptide synthetase ffsA.